Reading from the N-terminus, the 1408-residue chain is ABC multidrug transporter MDR1 (1408 aa).

Positions 79-88 are enriched in polar residues; sequence IAASSDTLRN. Residues 79 to 102 form a disordered region; that stretch reads IAASSDTLRNSPLEKPISNAFSKS. The next 2 helical transmembrane spans lie at 147–167 and 223–243; these read FAAPLEIIAMVLGLVLAVAAG and LYLMAIGIGMFLATWLYMFIW. Residues 157–464 enclose the ABC transmembrane type-1 1 domain; the sequence is VLGLVLAVAA…LAPELAAVTK (308 aa). N244 is a glycosylation site (N-linked (GlcNAc...) asparagine). Transmembrane regions (helical) follow at residues 296-316, 321-341, 408-428, and 436-456; these read KVALVFQYAGTFVCGFVLAFV, LAGALVSILPVIMLCGGIMMT, IMFFVIYAAYALAFFYGGILV, and GIVINVFMSILIGSFSMAMLA. An ABC transporter 1 domain is found at 499-744; it reads ISFENVKFHY…ENGPYAQLVN (246 aa). 534 to 541 contributes to the ATP binding site; that stretch reads GASGSGKS. N606 carries N-linked (GlcNAc...) asparagine glycosylation. The next 2 helical transmembrane spans lie at 838–858 and 882–902; these read IIAFIAAICAGMVYPSLAILF and LWYFITALAAAFVIFFQSAGF. An ABC transmembrane type-1 2 domain is found at 838–1125; sequence IIAFIAAICA…VFTFVPDASK (288 aa). Residue N934 is glycosylated (N-linked (GlcNAc...) asparagine). Transmembrane regions (helical) follow at residues 952 to 972, 981 to 999, 1072 to 1092, and 1099 to 1119; these read GLFGPTLGTVVQSCATLIGGC, LLALIGIACIPILVSGGYI, GLTFCIIALVFYIGALWIIDA, and FYTVLNSIVFASIQAGNVFTF. N1127 and N1182 each carry an N-linked (GlcNAc...) asparagine glycan. Residues 1162–1402 form the ABC transporter 2 domain; sequence VRIEGVHFRY…KGGYYELVQM (241 aa). Residue 1197-1204 participates in ATP binding; sequence GPSGCGKS. N1404 carries an N-linked (GlcNAc...) asparagine glycan.

It belongs to the ABC transporter superfamily. ABCB family. Multidrug resistance exporter (TC 3.A.1.201) subfamily.

It localises to the cell membrane. The catalysed reaction is itraconazole(in) + ATP + H2O = itraconazole(out) + ADP + phosphate + H(+). The enzyme catalyses voriconazole(in) + ATP + H2O = voriconazole(out) + ADP + phosphate + H(+). It catalyses the reaction fluconazole(in) + ATP + H2O = fluconazole(out) + ADP + phosphate + H(+). In terms of biological role, pleiotropic ABC efflux transporter that confers resistance to structurally and functionally unrelated compounds including azoles such as fluconazole (FLC), itraconazole (ITC), posaconazole (POS), and voriconazole (VRC). The protein is ABC multidrug transporter MDR1 of Cryptococcus neoformans var. grubii serotype A (strain H99 / ATCC 208821 / CBS 10515 / FGSC 9487) (Filobasidiella neoformans var. grubii).